The chain runs to 506 residues: NAD(P)H-quinone oxidoreductase subunit 2 (506 aa).

Helical transmembrane passes span 14-34 (AIIPEAFILLGIVGTLLVDLA), 42-62 (WAPSICYLSIGSSLLSLTLQW), 79-99 (LAIAFRAIIALSTLVSLLISW), 108-128 (PIGEFAAIVLSATLGAMLLCG), 132-152 (LISVFISLETLSVASYLLSGY), 167-187 (LLVGSAAAAVYLYGSSFLYGL), 206-226 (FITSLALVFVLSTVAFKIAAV), 240-260 (PTPVVAFLSVGSKTAGFAFAI), 276-296 (LLFTILAILSMALGNVVALAQ), 302-322 (MLAYSSIGQAGFVMIGIVSGT), 330-350 (VLYLAAYLFMNLGAFSCVILF), 374-394 (LGLSLCLLSLGGLPPMLGFFG), and 409-429 (LLVIVGLVTSVISIYYYISVI).

The protein belongs to the complex I subunit 2 family. As to quaternary structure, NDH-1 can be composed of about 15 different subunits; different subcomplexes with different compositions have been identified which probably have different functions.

It localises to the cellular thylakoid membrane. It catalyses the reaction a plastoquinone + NADH + (n+1) H(+)(in) = a plastoquinol + NAD(+) + n H(+)(out). The catalysed reaction is a plastoquinone + NADPH + (n+1) H(+)(in) = a plastoquinol + NADP(+) + n H(+)(out). Functionally, NDH-1 shuttles electrons from an unknown electron donor, via FMN and iron-sulfur (Fe-S) centers, to quinones in the respiratory and/or the photosynthetic chain. The immediate electron acceptor for the enzyme in this species is believed to be plastoquinone. Couples the redox reaction to proton translocation, and thus conserves the redox energy in a proton gradient. Cyanobacterial NDH-1 also plays a role in inorganic carbon-concentration. The sequence is that of NAD(P)H-quinone oxidoreductase subunit 2 from Prochlorococcus marinus (strain MIT 9301).